Reading from the N-terminus, the 170-residue chain is ATP synthase subunit b (170 aa).

Residues 11–31 form a helical membrane-spanning segment; sequence AFTFGDAFFTLFAFAILLVLI.

The protein belongs to the ATPase B chain family. In terms of assembly, F-type ATPases have 2 components, F(1) - the catalytic core - and F(0) - the membrane proton channel. F(1) has five subunits: alpha(3), beta(3), gamma(1), delta(1), epsilon(1). F(0) has three main subunits: a(1), b(2) and c(10-14). The alpha and beta chains form an alternating ring which encloses part of the gamma chain. F(1) is attached to F(0) by a central stalk formed by the gamma and epsilon chains, while a peripheral stalk is formed by the delta and b chains.

The protein localises to the cell membrane. Its function is as follows. F(1)F(0) ATP synthase produces ATP from ADP in the presence of a proton or sodium gradient. F-type ATPases consist of two structural domains, F(1) containing the extramembraneous catalytic core and F(0) containing the membrane proton channel, linked together by a central stalk and a peripheral stalk. During catalysis, ATP synthesis in the catalytic domain of F(1) is coupled via a rotary mechanism of the central stalk subunits to proton translocation. Functionally, component of the F(0) channel, it forms part of the peripheral stalk, linking F(1) to F(0). The sequence is that of ATP synthase subunit b from Listeria welshimeri serovar 6b (strain ATCC 35897 / DSM 20650 / CCUG 15529 / CIP 8149 / NCTC 11857 / SLCC 5334 / V8).